The sequence spans 322 residues: tRNA-modifying protein YgfZ (322 aa).

A folate-binding site is contributed by Trp-182.

This sequence belongs to the tRNA-modifying YgfZ family.

Its subcellular location is the cytoplasm. Folate-binding protein involved in regulating the level of ATP-DnaA and in the modification of some tRNAs. It is probably a key factor in regulatory networks that act via tRNA modification, such as initiation of chromosomal replication. The protein is tRNA-modifying protein YgfZ of Vibrio campbellii (strain ATCC BAA-1116).